Reading from the N-terminus, the 158-residue chain is Large ribosomal subunit protein mL50 (158 aa).

Belongs to the mitochondrion-specific ribosomal protein mL50 family. Component of the mitochondrial ribosome large subunit (39S) which comprises a 16S rRNA and about 50 distinct proteins.

It localises to the mitochondrion. The protein is Large ribosomal subunit protein mL50 (MRPL50) of Pongo abelii (Sumatran orangutan).